Reading from the N-terminus, the 153-residue chain is Troponin C (153 aa).

The residue at position 1 (Ala-1) is a Blocked amino end (Ala). 4 consecutive EF-hand domains span residues 10 to 45 (EQVQ…LGQT), 46 to 81 (FEEK…FLVE), 86 to 121 (AMQE…LDDK), and 122 to 153 (LTED…MMTG). Ca(2+) contacts are provided by Asp-59, Asp-61, Ser-63, Glu-65, Glu-70, Asp-99, Asp-110, Asp-135, Asp-137, Ser-139, Thr-141, and Glu-146.

This sequence belongs to the troponin C family.

Functionally, troponin is the central regulatory protein of striated muscle contraction. Tn consists of three components: Tn-I which is the inhibitor of actomyosin ATPase, Tn-T which contains the binding site for tropomyosin and Tn-C. The binding of calcium to Tn-C abolishes the inhibitory action of Tn on actin filaments. This is Troponin C from Tachypleus tridentatus (Japanese horseshoe crab).